A 514-amino-acid chain; its full sequence is Cytochrome P450 monooxygenase FUS8 (514 aa).

Residues 28–48 (LTVTKAVGAFIVLFIIIPKVF) traverse the membrane as a helical segment. 2 N-linked (GlcNAc...) asparagine glycosylation sites follow: Asn-225 and Asn-443. Cys-460 is a heme binding site.

Belongs to the cytochrome P450 family. Heme serves as cofactor.

Its subcellular location is the membrane. Its pathway is mycotoxin biosynthesis. Functionally, cytochrome P450 monooxygenase; part of the gene cluster that mediates the biosynthesis of the mycotoxin fusarin C. Within the cluster, FUS1, FUS2, FUS8 and FUS9 are sufficient for fusarin production. The roles of the other FUS members are yet undetermined. The fusarin C synthetase FUS1 is responsible for the condensation of one acetyl-coenzyme A (CoA) unit with six malonyl-CoA units and the amide linkage of the arising heptaketide and homoserine, subsequently releasing the first intermediate, prefusarin, as an alcohol with an open ring structure. The cytochrome P450 monooxygenase FUS8 participates in multiple oxidation processes at carbon C-20 and is able to use the FUS1 product as substrate, resulting in formation of 20-hydroxy-prefusarin. This reaction seems to be essential before the 2-pyrrolidone ring closure can be catalyzed by FUS2, generating 20-hydroxy-fusarin. FUS8 is able to further oxidizes carbon C-20 after ring closure, resulting in the formation of carboxy-fusarin C. As the last step, FUS9 methylates the hydroxyl group at C-21 to generate fusarin C. Fusarin C can then rearrange to epi-fusarin C, the (z)-isomers, and fusarin A and fusarin D. This is Cytochrome P450 monooxygenase FUS8 from Gibberella moniliformis (strain M3125 / FGSC 7600) (Maize ear and stalk rot fungus).